The following is a 162-amino-acid chain: tRNA-specific adenosine deaminase (162 aa).

In terms of domain architecture, CMP/dCMP-type deaminase spans Asp3–Lys115. Residue His54 participates in Zn(2+) binding. Glu56 serves as the catalytic Proton donor. Zn(2+)-binding residues include Cys84 and Cys87.

This sequence belongs to the cytidine and deoxycytidylate deaminase family. In terms of assembly, homodimer. It depends on Zn(2+) as a cofactor.

It carries out the reaction adenosine(34) in tRNA + H2O + H(+) = inosine(34) in tRNA + NH4(+). Functionally, catalyzes the deamination of adenosine to inosine at the wobble position 34 of tRNA(Arg2). This chain is tRNA-specific adenosine deaminase, found in Buchnera aphidicola subsp. Baizongia pistaciae (strain Bp).